A 305-amino-acid chain; its full sequence is Protoheme IX farnesyltransferase (305 aa).

9 consecutive transmembrane segments (helical) span residues 31–51 (VMSL…YSVH), 52–72 (PFIA…AGAI), 102–119 (ALSF…FMAL), 123–145 (LLAS…IWLK), 151–171 (NIVI…AAVS), 179–199 (IILF…LALF), 225–245 (ILIY…IGMN), 247–267 (FIYL…SGSL), and 284–304 (SIFY…ISLI).

The protein belongs to the UbiA prenyltransferase family. Protoheme IX farnesyltransferase subfamily.

The protein localises to the cell inner membrane. The catalysed reaction is heme b + (2E,6E)-farnesyl diphosphate + H2O = Fe(II)-heme o + diphosphate. The protein operates within porphyrin-containing compound metabolism; heme O biosynthesis; heme O from protoheme: step 1/1. Its function is as follows. Converts heme B (protoheme IX) to heme O by substitution of the vinyl group on carbon 2 of heme B porphyrin ring with a hydroxyethyl farnesyl side group. The sequence is that of Protoheme IX farnesyltransferase from Rickettsia felis (strain ATCC VR-1525 / URRWXCal2) (Rickettsia azadi).